The primary structure comprises 365 residues: Histidinol-phosphate aminotransferase (365 aa).

Position 220 is an N6-(pyridoxal phosphate)lysine (lysine 220).

It belongs to the class-II pyridoxal-phosphate-dependent aminotransferase family. Histidinol-phosphate aminotransferase subfamily. Homodimer. Requires pyridoxal 5'-phosphate as cofactor.

The enzyme catalyses L-histidinol phosphate + 2-oxoglutarate = 3-(imidazol-4-yl)-2-oxopropyl phosphate + L-glutamate. Its pathway is amino-acid biosynthesis; L-histidine biosynthesis; L-histidine from 5-phospho-alpha-D-ribose 1-diphosphate: step 7/9. This is Histidinol-phosphate aminotransferase from Neisseria meningitidis serogroup B (strain ATCC BAA-335 / MC58).